Here is a 104-residue protein sequence, read N- to C-terminus: Large ribosomal subunit protein cL38 (104 aa).

The N-terminal 39 residues, 1-39, are a transit peptide targeting the chloroplast; it reads MASVSSIFGCGVSMAPNSSLRNKAIRTERRSACGGLLIE. Residues 42 to 76 form a disordered region; sequence SRPQKKSTAHHMKTRPRKSRLSDRNRKPTVYAPLP. Over residues 44 to 60 the composition is skewed to basic residues; sequence PQKKSTAHHMKTRPRKS.

The protein belongs to the chloroplast-specific ribosomal protein cL38 family. Part of the 50S ribosomal subunit.

It is found in the plastid. The protein localises to the chloroplast. The protein is Large ribosomal subunit protein cL38 (PSRP6) of Pisum sativum (Garden pea).